A 252-amino-acid polypeptide reads, in one-letter code: Probable transcriptional regulatory protein A1C_04175 (252 aa).

This sequence belongs to the TACO1 family.

It localises to the cytoplasm. This is Probable transcriptional regulatory protein A1C_04175 from Rickettsia akari (strain Hartford).